The primary structure comprises 500 residues: Cytochrome P450 11B3, mitochondrial (500 aa).

Residues 1–24 (MALRVTADVWLARPWQCLHRTRAL) constitute a mitochondrion transit peptide. C447 serves as a coordination point for heme.

Belongs to the cytochrome P450 family. Heme serves as cofactor. In terms of tissue distribution, expressed in the adrenal cortex and in different brain tissues, including hippocampus, hypothalamus, cerebellum, cerebral cortex, and midbrain.

It is found in the mitochondrion membrane. It catalyses the reaction a steroid + 2 reduced [adrenodoxin] + O2 + 2 H(+) = an 11beta-hydroxysteroid + 2 oxidized [adrenodoxin] + H2O. It carries out the reaction 21-hydroxyprogesterone + 2 reduced [adrenodoxin] + O2 + 2 H(+) = corticosterone + 2 oxidized [adrenodoxin] + H2O. The enzyme catalyses 21-hydroxyprogesterone + 2 reduced [adrenodoxin] + O2 + 2 H(+) = 18-hydroxy-11-deoxycorticosterone + 2 oxidized [adrenodoxin] + H2O. The catalysed reaction is 21-hydroxyprogesterone + 2 reduced [adrenodoxin] + O2 + 2 H(+) = 19-hydroxy-11-deoxycorticosterone + 2 oxidized [adrenodoxin] + H2O. Functionally, a cytochrome P450 monooxygenase involved in the biosynthesis of adrenal corticoids. Catalyzes the hydroxylation of steroids at 11beta, 18- or 19-positions, with preferred regioselectivity at 11beta and 18. Converts 11-deoxycorticosterone into corticosterone, 18-hydroxy-11-deoxycorticosterone, and/or 19-hydroxy-11-deoxycorticosterone, but not to 18-hydroxycorticosterone or aldosterone. Mechanistically, uses molecular oxygen inserting one oxygen atom into a substrate for hydroxylation and reducing the second into a water molecule. Two electrons are provided by NADPH via a two-protein mitochondrial transfer system comprising flavoprotein FDXR (adrenodoxin/ferredoxin reductase) and nonheme iron-sulfur protein FDX1 or FDX2 (adrenodoxin/ferredoxin). The protein is Cytochrome P450 11B3, mitochondrial (Cyp11b3) of Rattus norvegicus (Rat).